We begin with the raw amino-acid sequence, 735 residues long: Zinc finger CCCH domain-containing protein 14 (735 aa).

Position 1 is an N-acetylmethionine (Met1). The disordered stretch occupies residues 78–153 (TEPSSLKSPD…RHSYDDGAST (76 aa)). Ser85 bears the Phosphoserine mark. Residues Lys99, Lys139, Lys175, and Lys198 each participate in a glycyl lysine isopeptide (Lys-Gly) (interchain with G-Cter in SUMO2) cross-link. Positions 131 to 144 (VSTSSQEQKSTNVR) are enriched in polar residues. Ser240 is modified (phosphoserine). Glycyl lysine isopeptide (Lys-Gly) (interchain with G-Cter in SUMO2) cross-links involve residues Lys245, Lys283, and Lys295. Residues 308 to 351 (FSHDGEEEEEDEDYGTRIGSLSSSVSVPAKPERRPSLPPSKQAN) form a disordered region. 3 positions are modified to phosphoserine: Ser309, Ser327, and Ser343. Lys357 carries the post-translational modification N6-acetyllysine; alternate. Lys357 participates in a covalent cross-link: Glycyl lysine isopeptide (Lys-Gly) (interchain with G-Cter in SUMO2); alternate. A Glycyl lysine isopeptide (Lys-Gly) (interchain with G-Cter in SUMO2) cross-link involves residue Lys378. 2 positions are modified to phosphoserine: Ser390 and Ser409. Residues 399–431 (VQGQNRAPRISPPVKEEEAKGDNTGKSQGTQQR) form a disordered region. Over residues 412 to 421 (VKEEEAKGDN) the composition is skewed to basic and acidic residues. A Glycyl lysine isopeptide (Lys-Gly) (interchain with G-Cter in SUMO2) cross-link involves residue Lys413. Residues 422-431 (TGKSQGTQQR) show a composition bias toward polar residues. Lys489 participates in a covalent cross-link: Glycyl lysine isopeptide (Lys-Gly) (interchain with G-Cter in SUMO2). Residues Ser498, Ser515, Ser527, and Ser620 each carry the phosphoserine modification. 5 consecutive C3H1-type zinc fingers follow at residues 595-620 (EKLLERCKYWPACKNGDECVYHHPIS), 621-640 (PCKAFPNCKFAEKCLFVHPN), 641-656 (CKYDTKCTKADCPFTH), 681-698 (CRYFPACKKMECPFYHPK), and 700-718 (CRFNTQCTRPDCTFYHPTI).

It belongs to the ZC3H14 family. In terms of assembly, homodimer; facilitating circular RNAs (circRNAs) formation. Associates with the spliceosome. Interacts with HOOK2. Interacts with ZFC3H1 in a RNase-sensitive manner. In terms of tissue distribution, expressed in hippocampal pyramidal neurons (at protein level). Expressed in kidney, liver, muscle, heart brain and testes. Expressed in hippocampal pyramidal neurons.

It is found in the nucleus speckle. Its function is as follows. RNA-binding protein involved in the biogenesis of circular RNAs (circRNAs), which are produced by back-splicing circularization of pre-mRNAs. Acts by binding to both exon-intron boundary and 3'-UTR of pre-mRNAs to promote circRNA biogenesis through dimerization and the association with the spliceosome. Required for spermatogenesis via involvement in circRNA biogenesis. Regulates the pre-mRNA processing of ATP5MC1; preventing its degradation. Also binds the poly(A) tail of mRNAs; controlling poly(A) length in neuronal cells. The protein is Zinc finger CCCH domain-containing protein 14 of Mus musculus (Mouse).